The sequence spans 84 residues: Exodeoxyribonuclease 7 small subunit (84 aa).

It belongs to the XseB family. In terms of assembly, heterooligomer composed of large and small subunits.

It localises to the cytoplasm. It carries out the reaction Exonucleolytic cleavage in either 5'- to 3'- or 3'- to 5'-direction to yield nucleoside 5'-phosphates.. Its function is as follows. Bidirectionally degrades single-stranded DNA into large acid-insoluble oligonucleotides, which are then degraded further into small acid-soluble oligonucleotides. This Bacillus velezensis (strain DSM 23117 / BGSC 10A6 / LMG 26770 / FZB42) (Bacillus amyloliquefaciens subsp. plantarum) protein is Exodeoxyribonuclease 7 small subunit.